We begin with the raw amino-acid sequence, 500 residues long: Transcription termination/antitermination protein NusA (500 aa).

The 71-residue stretch at Gly135–Ser205 folds into the S1 motif domain. In terms of domain architecture, KH spans Lys307–Glu373. Tandem repeats lie at residues Asp369–Leu419 and Gly444–Cys494. A 2 X 51 AA approximate repeats region spans residues Asp369–Cys494.

This sequence belongs to the NusA family. In terms of assembly, monomer. Binds directly to the core enzyme of the DNA-dependent RNA polymerase and to nascent RNA.

Its subcellular location is the cytoplasm. Participates in both transcription termination and antitermination. The sequence is that of Transcription termination/antitermination protein NusA from Salmonella typhimurium (strain LT2 / SGSC1412 / ATCC 700720).